The chain runs to 293 residues: Probable aspartoacylase (293 aa).

Zn(2+) is bound by residues histidine 14 and glutamate 17. Residues arginine 56 and 63 to 64 (NR) contribute to the substrate site. Histidine 106 is a binding site for Zn(2+). Substrate is bound by residues glutamate 165 and tyrosine 276.

The protein belongs to the AspA/AstE family. Aspartoacylase subfamily. The cofactor is Zn(2+).

The catalysed reaction is an N-acyl-L-aspartate + H2O = a carboxylate + L-aspartate. The polypeptide is Probable aspartoacylase (Trichodesmium erythraeum (strain IMS101)).